Reading from the N-terminus, the 510-residue chain is 2,3-bisphosphoglycerate-independent phosphoglycerate mutase (510 aa).

Mn(2+) contacts are provided by Asp12 and Ser62. Ser62 serves as the catalytic Phosphoserine intermediate. Substrate contacts are provided by residues His123, 153–154, Arg185, Arg191, 260–263, and Lys335; these read RD and RPDR. Mn(2+) is bound by residues Asp402, His406, Asp443, His444, and His461.

The protein belongs to the BPG-independent phosphoglycerate mutase family. As to quaternary structure, monomer. The cofactor is Mn(2+).

The enzyme catalyses (2R)-2-phosphoglycerate = (2R)-3-phosphoglycerate. Its pathway is carbohydrate degradation; glycolysis; pyruvate from D-glyceraldehyde 3-phosphate: step 3/5. In terms of biological role, catalyzes the interconversion of 2-phosphoglycerate and 3-phosphoglycerate. The sequence is that of 2,3-bisphosphoglycerate-independent phosphoglycerate mutase from Listeria monocytogenes serovar 1/2a (strain ATCC BAA-679 / EGD-e).